The primary structure comprises 163 residues: tRNA-acetylating toxin 2 (163 aa).

Tyr-137 is an active-site residue.

It belongs to the acetyltransferase family. GNAT subfamily. As to quaternary structure, homodimer. Forms a complex with cognate antitoxin TacA2.

It catalyses the reaction glycyl-tRNA(Gly) + acetyl-CoA = N-acetylglycyl-tRNA(Gly) + CoA + H(+). The catalysed reaction is L-isoleucyl-tRNA(Ile) + acetyl-CoA = N-acetyl-L-isoleucyl-tRNA(Ile) + CoA + H(+). It carries out the reaction L-leucyl-tRNA(Leu) + acetyl-CoA = N-acetyl-L-leucyl-tRNA(Leu) + CoA + H(+). Functionally, toxic component of a type II toxin-antitoxin (TA) system. Acetylates tRNA and inhibits translation. Acetylates mainly Gly and Ile/Leu in vitro. Overexpression during the lag phase of a tacA2-tacT2 deletion strain leads to a 100-fold increase in persister cells in the presence of cefotaxime and a non-growth state in the absence of antibiotic. This protein, which has a single amino acid compared to S.typhimurium strain 14028s (Lys-29 is Glu in 14028s), produces 100-fold more persister cells, has much higher acetylation activity and binds tRNA much better. Persister cell formation and the growth defect are neutralized by cognate antitoxin TacA2. Its function is as follows. The TacA2-TacT2 complex both represses and derepresses expression of its own operon. The polypeptide is tRNA-acetylating toxin 2 (Salmonella enteritidis).